A 598-amino-acid polypeptide reads, in one-letter code: UvrABC system protein C (598 aa).

A GIY-YIG domain is found at 13 to 91 (TLPGVYRMVD…IKGLKPRFNI (79 aa)). The UVR domain occupies 200 to 235 (TALTEEITAQMNAAAENLDFETAAYLRDRLRMLATV).

Belongs to the UvrC family. In terms of assembly, interacts with UvrB in an incision complex.

It is found in the cytoplasm. The UvrABC repair system catalyzes the recognition and processing of DNA lesions. UvrC both incises the 5' and 3' sides of the lesion. The N-terminal half is responsible for the 3' incision and the C-terminal half is responsible for the 5' incision. This is UvrABC system protein C from Thiobacillus denitrificans (strain ATCC 25259 / T1).